Reading from the N-terminus, the 84-residue chain is Cell division topological specificity factor (84 aa).

This sequence belongs to the MinE family.

Functionally, prevents the cell division inhibition by proteins MinC and MinD at internal division sites while permitting inhibition at polar sites. This ensures cell division at the proper site by restricting the formation of a division septum at the midpoint of the long axis of the cell. The protein is Cell division topological specificity factor of Paraburkholderia phytofirmans (strain DSM 17436 / LMG 22146 / PsJN) (Burkholderia phytofirmans).